The primary structure comprises 137 residues: Small ribosomal subunit protein uS12 (137 aa).

Disordered stretches follow at residues 1 to 21 and 36 to 57; these read MPTI…KSDS and TKLS…TPKK. Residue D102 is modified to 3-methylthioaspartic acid.

Belongs to the universal ribosomal protein uS12 family. In terms of assembly, part of the 30S ribosomal subunit. Contacts proteins S8 and S17. May interact with IF1 in the 30S initiation complex.

Its function is as follows. With S4 and S5 plays an important role in translational accuracy. Interacts with and stabilizes bases of the 16S rRNA that are involved in tRNA selection in the A site and with the mRNA backbone. Located at the interface of the 30S and 50S subunits, it traverses the body of the 30S subunit contacting proteins on the other side and probably holding the rRNA structure together. The combined cluster of proteins S8, S12 and S17 appears to hold together the shoulder and platform of the 30S subunit. The polypeptide is Small ribosomal subunit protein uS12 (Streptococcus agalactiae serotype Ia (strain ATCC 27591 / A909 / CDC SS700)).